The sequence spans 337 residues: F420-dependent glucose-6-phosphate dehydrogenase 2 (337 aa).

A coenzyme F420-(gamma-Glu)n-binding site is contributed by Asp40. His41 (proton donor) is an active-site residue. Coenzyme F420-(gamma-Glu)n-binding positions include Thr77 and 108 to 109 (TG). Catalysis depends on Glu110, which acts as the Proton acceptor. Residues Asn113, 178-179 (GG), and 181-182 (VV) contribute to the coenzyme F420-(gamma-Glu)n site. The substrate site is built by Thr196, Lys199, Lys260, and Arg284.

It belongs to the F420-dependent glucose-6-phosphate dehydrogenase family. Homodimer.

The enzyme catalyses oxidized coenzyme F420-(gamma-L-Glu)(n) + D-glucose 6-phosphate + H(+) = 6-phospho-D-glucono-1,5-lactone + reduced coenzyme F420-(gamma-L-Glu)(n). Catalyzes the coenzyme F420-dependent oxidation of glucose 6-phosphate (G6P) to 6-phosphogluconolactone. The sequence is that of F420-dependent glucose-6-phosphate dehydrogenase 2 from Rhodococcus jostii (strain RHA1).